Reading from the N-terminus, the 74-residue chain is Conotoxin VxVIA (74 aa).

Positions 1–22 (MKLTCVLIIAVLFLTAYQLATA) are cleaved as a signal peptide. The propeptide occupies 23–47 (ASHAKGKQKHRALRPADKHFRFTKR). Disulfide bonds link Cys48-Cys62, Cys55-Cys66, and Cys61-Cys73.

In terms of tissue distribution, expressed by the venom duct.

Its subcellular location is the secreted. In terms of biological role, when injected intracranially in mice, induces a series of symptoms such as quivering, climbing, scratching, barrel rolling and paralysis of limbs. Unexpectedly, no effect is observed on ionic currents when tested on locust DUM neuron. The sequence is that of Conotoxin VxVIA from Conus vexillum (Flag cone).